A 430-amino-acid polypeptide reads, in one-letter code: Enolase (430 aa).

Gln167 contacts (2R)-2-phosphoglycerate. Glu209 serves as the catalytic Proton donor. Mg(2+) is bound by residues Asp245, Glu286, and Asp313. Lys338, Arg367, Ser368, and Lys389 together coordinate (2R)-2-phosphoglycerate. Lys338 (proton acceptor) is an active-site residue.

It belongs to the enolase family. The cofactor is Mg(2+).

The protein resides in the cytoplasm. The protein localises to the secreted. It is found in the cell surface. It carries out the reaction (2R)-2-phosphoglycerate = phosphoenolpyruvate + H2O. It functions in the pathway carbohydrate degradation; glycolysis; pyruvate from D-glyceraldehyde 3-phosphate: step 4/5. Catalyzes the reversible conversion of 2-phosphoglycerate (2-PG) into phosphoenolpyruvate (PEP). It is essential for the degradation of carbohydrates via glycolysis. This chain is Enolase, found in Synechococcus sp. (strain CC9902).